We begin with the raw amino-acid sequence, 390 residues long: O-phospho-L-seryl-tRNA:Cys-tRNA synthase 2 (390 aa).

Pyridoxal 5'-phosphate-binding positions include 83 to 84 (AR), N187, and 210 to 212 (SGH). N6-(pyridoxal phosphate)lysine is present on K213.

Belongs to the SepCysS family. In terms of assembly, homodimer. Interacts with SepRS. Pyridoxal 5'-phosphate serves as cofactor.

The catalysed reaction is O-phospho-L-seryl-tRNA(Cys) + hydrogen sulfide + H(+) = L-cysteinyl-tRNA(Cys) + phosphate. Its function is as follows. Converts O-phospho-L-seryl-tRNA(Cys) (Sep-tRNA(Cys)) to L-cysteinyl-tRNA(Cys) (Cys-tRNA(Cys)). The protein is O-phospho-L-seryl-tRNA:Cys-tRNA synthase 2 of Archaeoglobus fulgidus (strain ATCC 49558 / DSM 4304 / JCM 9628 / NBRC 100126 / VC-16).